We begin with the raw amino-acid sequence, 341 residues long: Tetraacyldisaccharide 4'-kinase (341 aa).

T54–T61 lines the ATP pocket.

It belongs to the LpxK family.

The enzyme catalyses a lipid A disaccharide + ATP = a lipid IVA + ADP + H(+). It functions in the pathway glycolipid biosynthesis; lipid IV(A) biosynthesis; lipid IV(A) from (3R)-3-hydroxytetradecanoyl-[acyl-carrier-protein] and UDP-N-acetyl-alpha-D-glucosamine: step 6/6. Its function is as follows. Transfers the gamma-phosphate of ATP to the 4'-position of a tetraacyldisaccharide 1-phosphate intermediate (termed DS-1-P) to form tetraacyldisaccharide 1,4'-bis-phosphate (lipid IVA). The polypeptide is Tetraacyldisaccharide 4'-kinase (Brucella anthropi (strain ATCC 49188 / DSM 6882 / CCUG 24695 / JCM 21032 / LMG 3331 / NBRC 15819 / NCTC 12168 / Alc 37) (Ochrobactrum anthropi)).